A 364-amino-acid polypeptide reads, in one-letter code: Methylthioribose-1-phosphate isomerase (364 aa).

Residues 51–53, arginine 88, and glutamine 199 contribute to the substrate site; that span reads RGA. The active-site Proton donor is the aspartate 240. Residue 250 to 251 coordinates substrate; it reads NK.

The protein belongs to the eIF-2B alpha/beta/delta subunits family. MtnA subfamily.

The catalysed reaction is 5-(methylsulfanyl)-alpha-D-ribose 1-phosphate = 5-(methylsulfanyl)-D-ribulose 1-phosphate. It participates in amino-acid biosynthesis; L-methionine biosynthesis via salvage pathway; L-methionine from S-methyl-5-thio-alpha-D-ribose 1-phosphate: step 1/6. In terms of biological role, catalyzes the interconversion of methylthioribose-1-phosphate (MTR-1-P) into methylthioribulose-1-phosphate (MTRu-1-P). The chain is Methylthioribose-1-phosphate isomerase from Cereibacter sphaeroides (strain KD131 / KCTC 12085) (Rhodobacter sphaeroides).